Here is a 95-residue protein sequence, read N- to C-terminus: Putative pterin-4-alpha-carbinolamine dehydratase (95 aa).

The protein belongs to the pterin-4-alpha-carbinolamine dehydratase family.

The enzyme catalyses (4aS,6R)-4a-hydroxy-L-erythro-5,6,7,8-tetrahydrobiopterin = (6R)-L-erythro-6,7-dihydrobiopterin + H2O. This is Putative pterin-4-alpha-carbinolamine dehydratase from Solibacter usitatus (strain Ellin6076).